The following is a 172-amino-acid chain: Protein GrpE (172 aa).

Over residues 1–11 (MSEENNSQNSN) the composition is skewed to low complexity. The tract at residues 1-22 (MSEENNSQNSNPPNPENGEIAS) is disordered.

This sequence belongs to the GrpE family. As to quaternary structure, homodimer.

The protein resides in the cytoplasm. Participates actively in the response to hyperosmotic and heat shock by preventing the aggregation of stress-denatured proteins, in association with DnaK and GrpE. It is the nucleotide exchange factor for DnaK and may function as a thermosensor. Unfolded proteins bind initially to DnaJ; upon interaction with the DnaJ-bound protein, DnaK hydrolyzes its bound ATP, resulting in the formation of a stable complex. GrpE releases ADP from DnaK; ATP binding to DnaK triggers the release of the substrate protein, thus completing the reaction cycle. Several rounds of ATP-dependent interactions between DnaJ, DnaK and GrpE are required for fully efficient folding. The sequence is that of Protein GrpE from Bdellovibrio bacteriovorus (strain ATCC 15356 / DSM 50701 / NCIMB 9529 / HD100).